The following is a 152-amino-acid chain: Large ribosomal subunit protein uL13 (152 aa).

Belongs to the universal ribosomal protein uL13 family. In terms of assembly, part of the 50S ribosomal subunit.

In terms of biological role, this protein is one of the early assembly proteins of the 50S ribosomal subunit, although it is not seen to bind rRNA by itself. It is important during the early stages of 50S assembly. This chain is Large ribosomal subunit protein uL13, found in Wolbachia sp. subsp. Drosophila simulans (strain wRi).